A 258-amino-acid chain; its full sequence is MVELSEIPGDPNGADPNNNPQEEDEENLPILLQLPEELIERIIAHFPQCYSPSPILVCETFRQVINSDHFYYVTRSLLSFTKPVLYALIAFQAYTRPSWFFLRQSNIALQLHRIRSYEPVQGLWESWGEESELMRFWHSVSSCVVGDLLYALDLTCALEHPIVVYYPNEFVWRPVMGVDTAHLPILCEYRSTLANFDGKLVILGGGDCSESSSEIWCVEIALETRQGDQIWGVVKSVSIVSRDLPMRHVIELCRTVMV.

The tract at residues 1-25 (MVELSEIPGDPNGADPNNNPQEEDE) is disordered. The segment covering 8 to 20 (PGDPNGADPNNNP) has biased composition (low complexity). The 47-residue stretch at 28–74 (LPILLQLPEELIERIIAHFPQCYSPSPILVCETFRQVINSDHFYYVT) folds into the F-box domain.

In Arabidopsis thaliana (Mouse-ear cress), this protein is Probable F-box protein At2g29610.